The chain runs to 256 residues: Small ribosomal subunit protein eS1A (256 aa).

N-acetylalanine; partial is present on Ala-2.

This sequence belongs to the eukaryotic ribosomal protein eS1 family. Component of the small ribosomal subunit. Mature ribosomes consist of a small (40S) and a large (60S) subunit. The 40S subunit contains about 33 different proteins and 1 molecule of RNA (18S). The 60S subunit contains about 49 different proteins and 3 molecules of RNA (25S, 5.8S and 5S).

It is found in the cytoplasm. This Clavispora lusitaniae (strain ATCC 42720) (Yeast) protein is Small ribosomal subunit protein eS1A.